Here is a 496-residue protein sequence, read N- to C-terminus: Bifunctional protein HldE (496 aa).

Residues 1 to 331 (MDPTPALAEI…AAVHQEEVSA (331 aa)) are ribokinase. 206–209 (NRKE) lines the ATP pocket. Residue aspartate 276 is part of the active site. The tract at residues 358–496 (FTNGCFDLLH…GGSRRSGDTL (139 aa)) is cytidylyltransferase.

It in the N-terminal section; belongs to the carbohydrate kinase PfkB family. This sequence in the C-terminal section; belongs to the cytidylyltransferase family. Homodimer.

The catalysed reaction is D-glycero-beta-D-manno-heptose 7-phosphate + ATP = D-glycero-beta-D-manno-heptose 1,7-bisphosphate + ADP + H(+). The enzyme catalyses D-glycero-beta-D-manno-heptose 1-phosphate + ATP + H(+) = ADP-D-glycero-beta-D-manno-heptose + diphosphate. The protein operates within nucleotide-sugar biosynthesis; ADP-L-glycero-beta-D-manno-heptose biosynthesis; ADP-L-glycero-beta-D-manno-heptose from D-glycero-beta-D-manno-heptose 7-phosphate: step 1/4. It participates in nucleotide-sugar biosynthesis; ADP-L-glycero-beta-D-manno-heptose biosynthesis; ADP-L-glycero-beta-D-manno-heptose from D-glycero-beta-D-manno-heptose 7-phosphate: step 3/4. Catalyzes the phosphorylation of D-glycero-D-manno-heptose 7-phosphate at the C-1 position to selectively form D-glycero-beta-D-manno-heptose-1,7-bisphosphate. Its function is as follows. Catalyzes the ADP transfer from ATP to D-glycero-beta-D-manno-heptose 1-phosphate, yielding ADP-D-glycero-beta-D-manno-heptose. This chain is Bifunctional protein HldE, found in Rhodospirillum rubrum (strain ATCC 11170 / ATH 1.1.1 / DSM 467 / LMG 4362 / NCIMB 8255 / S1).